We begin with the raw amino-acid sequence, 477 residues long: Glycogen synthase (477 aa).

K15 serves as a coordination point for ADP-alpha-D-glucose.

It belongs to the glycosyltransferase 1 family. Bacterial/plant glycogen synthase subfamily.

The catalysed reaction is [(1-&gt;4)-alpha-D-glucosyl](n) + ADP-alpha-D-glucose = [(1-&gt;4)-alpha-D-glucosyl](n+1) + ADP + H(+). It functions in the pathway glycan biosynthesis; glycogen biosynthesis. Synthesizes alpha-1,4-glucan chains using ADP-glucose. The protein is Glycogen synthase of Streptococcus pneumoniae (strain 70585).